Here is a 343-residue protein sequence, read N- to C-terminus: Heat-inducible transcription repressor HrcA (343 aa).

It belongs to the HrcA family.

Functionally, negative regulator of class I heat shock genes (grpE-dnaK-dnaJ and groELS operons). Prevents heat-shock induction of these operons. The protein is Heat-inducible transcription repressor HrcA of Halalkalibacterium halodurans (strain ATCC BAA-125 / DSM 18197 / FERM 7344 / JCM 9153 / C-125) (Bacillus halodurans).